We begin with the raw amino-acid sequence, 595 residues long: CDPK-related kinase 3 (595 aa).

A disordered region spans residues 1-131 (MGQCYGKVNQ…GTEPEQSLDK (131 aa)). G2 carries N-myristoyl glycine lipidation. A compositionally biased stretch (polar residues) spans 20–37 (NTTTYVVSGDGNQIQPLT). A compositionally biased stretch (basic and acidic residues) spans 111-124 (KPKEGPIPEERGTE). Residues 143–405 (YELGKEVGRG…AVQALTHPWL (263 aa)) form the Protein kinase domain. ATP-binding positions include 149 to 157 (VGRGHFGHT) and K175. D271 functions as the Proton acceptor in the catalytic mechanism. S311 is subject to Phosphoserine. A Phosphoserine; by CPK1 and CPK34 modification is found at S353. Residues 409–439 (SRVIPLDILIYKLVKAYLHATPLRRAALKAL) form an autoinhibitory domain region. The segment at 428–448 (ATPLRRAALKALAKALTENEL) is calmodulin binding (CaMBD). 4 consecutive EF-hand domains span residues 446–482 (NELV…ATDA), 483–518 (MRES…IHQL), 519–558 (EAVD…GASA), and 559–588 (YGHL…VTLR). Ca(2+) is bound by residues N461, D463, S465, K502, E507, N540, E547, S568, D570, and K572. S574 bears the Phosphoserine mark.

This sequence belongs to the protein kinase superfamily. Ser/Thr protein kinase family. CDPK subfamily. Binds calmodulin (CaM) in a calcium-dependent manner. Interacts with GLN1-1. In terms of processing, autophosphorylated. In terms of tissue distribution, ubiquitously expressed with higher levels in siliques and roots, especially at the root cap. Particularly present in vascular bundles of stems and leaves.

The protein localises to the cytoplasm. Its subcellular location is the membrane. It carries out the reaction L-seryl-[protein] + ATP = O-phospho-L-seryl-[protein] + ADP + H(+). The enzyme catalyses L-threonyl-[protein] + ATP = O-phospho-L-threonyl-[protein] + ADP + H(+). With respect to regulation, not activated by calcium. Autophosphorylation may play an important role in the regulation of the kinase activity. Stimulated by magnesium ions (optimum at 10-15 mM) and manganese ions. May play a role in signal transduction pathways that involve calcium as a second messenger. Serine/threonine kinase that phosphorylates histone H3 an GLN1-1. The chain is CDPK-related kinase 3 (CRK3) from Arabidopsis thaliana (Mouse-ear cress).